A 325-amino-acid polypeptide reads, in one-letter code: Probable serine/threonine-protein phosphatase 2A activator 1 (325 aa).

Belongs to the PTPA-type PPIase family.

It is found in the cytoplasm. The catalysed reaction is [protein]-peptidylproline (omega=180) = [protein]-peptidylproline (omega=0). In terms of biological role, PPIases accelerate the folding of proteins. It catalyzes the cis-trans isomerization of proline imidic peptide bonds in oligopeptides. Acts as a regulatory subunit for PP2A-like phosphatases modulating their activity or substrate specificity, probably by inducing a conformational change in the catalytic subunit, a direct target of the PPIase. The polypeptide is Probable serine/threonine-protein phosphatase 2A activator 1 (ppp2r4A) (Dictyostelium discoideum (Social amoeba)).